We begin with the raw amino-acid sequence, 428 residues long: Enolase (428 aa).

Gln164 is a binding site for (2R)-2-phosphoglycerate. Glu208 serves as the catalytic Proton donor. Asp245, Glu286, and Asp313 together coordinate Mg(2+). Residues Lys338, Arg367, Ser368, and Lys389 each coordinate (2R)-2-phosphoglycerate. Lys338 (proton acceptor) is an active-site residue.

It belongs to the enolase family. Mg(2+) is required as a cofactor.

Its subcellular location is the cytoplasm. The protein resides in the secreted. The protein localises to the cell surface. It carries out the reaction (2R)-2-phosphoglycerate = phosphoenolpyruvate + H2O. It participates in carbohydrate degradation; glycolysis; pyruvate from D-glyceraldehyde 3-phosphate: step 4/5. Functionally, catalyzes the reversible conversion of 2-phosphoglycerate (2-PG) into phosphoenolpyruvate (PEP). It is essential for the degradation of carbohydrates via glycolysis. In Pyrococcus abyssi (strain GE5 / Orsay), this protein is Enolase.